The following is a 132-amino-acid chain: Cell division protein FtsL (132 aa).

Over 1–50 (MAELKKMRHNHYDVPVMDEPVIASQIKKTNQKKESFQLPQKKLNKISVFE) the chain is Cytoplasmic. Residues 51-71 (KILCILLLCSIVGIVVITIQI) form a helical membrane-spanning segment. Over 72–132 (RTTISETMNN…EIDGNLRKVK (61 aa)) the chain is Extracellular.

It belongs to the FtsL family.

The protein localises to the cell membrane. Its function is as follows. Essential cell division protein. This Melissococcus plutonius (strain ATCC 35311 / DSM 29964 / CIP 104052 / LMG 20360 / NCIMB 702443) protein is Cell division protein FtsL.